The primary structure comprises 336 residues: tRNA N6-adenosine threonylcarbamoyltransferase (336 aa).

Histidine 114 and histidine 118 together coordinate Fe cation. Residues 136 to 140 (LVSGG), aspartate 169, glycine 182, aspartate 186, and asparagine 275 contribute to the substrate site. Residue aspartate 301 coordinates Fe cation.

Belongs to the KAE1 / TsaD family. Fe(2+) serves as cofactor.

It localises to the cytoplasm. It catalyses the reaction L-threonylcarbamoyladenylate + adenosine(37) in tRNA = N(6)-L-threonylcarbamoyladenosine(37) in tRNA + AMP + H(+). Required for the formation of a threonylcarbamoyl group on adenosine at position 37 (t(6)A37) in tRNAs that read codons beginning with adenine. Is involved in the transfer of the threonylcarbamoyl moiety of threonylcarbamoyl-AMP (TC-AMP) to the N6 group of A37, together with TsaE and TsaB. TsaD likely plays a direct catalytic role in this reaction. The polypeptide is tRNA N6-adenosine threonylcarbamoyltransferase (Streptococcus pneumoniae serotype 2 (strain D39 / NCTC 7466)).